Reading from the N-terminus, the 481-residue chain is CASP8 and FADD-like apoptosis regulator (481 aa).

DED domains follow at residues 6 to 78 (VSAE…RILK) and 97 to 172 (DYRV…LNTK). The segment at 6-200 (VSAEVIHQVE…QASLPKLSIK (195 aa)) is interaction with CASP8. The segment at 6 to 229 (VSAEVIHQVE…DSQRTLVKTS (224 aa)) is interaction with FADD. The interaction with CASP8 propeptide stretch occupies residues 6–307 (VSAEVIHQVE…YASMAQHQDY (302 aa)). The interval 197-436 (LSIKYNSRLQ…KLSQQLKQGR (240 aa)) is interaction with CASP3. The tract at residues 197–481 (LSIKYNSRLQ…LRKKLILAPT (285 aa)) is interaction with TRAF1 and TRAF2. The interaction with CASP8 subunits p18 and p10 stretch occupies residues 219–481 (RDSQRTLVKT…LRKKLILAPT (263 aa)). A caspase region spans residues 265–360 (DTKYLQETFT…RGKPKLFFIQ (96 aa)). Positions 372–481 (SSLEVDGPSI…LRKKLILAPT (110 aa)) are interaction with CASP8.

This sequence belongs to the peptidase C14A family. As to quaternary structure, TNFRSF6 stimulation triggers recruitment to the death-inducing signaling complex (DISC) formed by TNFRSF6, FADD and CASP8. A proteolytic fragment (p43) stays associated with the DISC. Interacts with RIPK1. In terms of processing, proteolytically processed by CASP8 generating subunits p43 and p12. In terms of tissue distribution, highly expressed in heart.

Functionally, apoptosis regulator protein which may function as a crucial link between cell survival and cell death pathways in mammalian cells. Acts as an inhibitor of TNFRSF6 mediated apoptosis. A proteolytic fragment (p43) is likely retained in the death-inducing signaling complex (DISC) thereby blocking further recruitment and processing of caspase-8 at the complex. Full length and shorter isoforms have been shown either to induce apoptosis or to reduce TNFRSF-triggered apoptosis. Lacks enzymatic (caspase) activity. This chain is CASP8 and FADD-like apoptosis regulator (Cflar), found in Mus musculus (Mouse).